A 593-amino-acid chain; its full sequence is Chromodomain Y-like protein (593 aa).

The segment covering 1–14 (MGIGNSQPNSQEAQ) has biased composition (polar residues). The disordered stretch occupies residues 1–30 (MGIGNSQPNSQEAQLCTLPEKAEQPTDDNT). One can recognise a Chromo domain in the interval 56 to 116 (TQVESIVDKR…RHNERQKEGS (61 aa)). The tract at residues 56-304 (TQVESIVDKR…TIQTSVTGVT (249 aa)) is interaction with EZH2. A Phosphoserine modification is found at Ser83. Residues 110 to 158 (ERQKEGSLARASRASPSNARKQISRSTHSTLSKTNSKALVVGKDHESKS) form a disordered region. A compositionally biased stretch (low complexity) spans 117 to 129 (LARASRASPSNAR). Lys130 is modified (N6,N6,N6-trimethyllysine; by EHMT2; alternate). Residue Lys130 is modified to N6,N6-dimethyllysine; by EHMT2; alternate. Lys130 bears the N6-methyllysine; by EHMT2; alternate mark. Residues 133 to 146 (SRSTHSTLSKTNSK) show a composition bias toward polar residues. Residues Ser165, Ser196, and Ser211 each carry the phosphoserine modification. Positions 200–223 (GRTSVDGFQGESPEKLDPVDQGAE) are disordered. An acetyl-CoA-binding domain region spans residues 357–589 (SENNSLNPEV…DSMLKYLQRK (233 aa)).

As to quaternary structure, forms multimers and multimerization is required for stable binding to chromatin. Interacts with HDAC1 and HDAC2 via its C-terminal acetyl-CoA-binding domain. Interacts with EZH2, EED, SUZ12, REST, EHMT1 and EHMT2. Part of a complex containing at least CDYL, REST, WIZ, SETB1, EHMT1 and EHMT2. Part of a complex containing at least CDYL, MIER1, MIER2, HDAC1 and HDAC2. Interacts with CHAF1A and CHAF1B; bridging the CAF-1 complex to the MCM2-7 (MCM) complex. Interacts with MCM3 and MCM5; bridging the CAF-1 complex to the MCM2-7 (MCM) complex. Interacts with EHMT2 and PRDM9; interaction only takes place when PRDM9 is bound to hotspot DNA. In terms of tissue distribution, highly expressed in testis (at protein level). Expressed in the hippocampus (at protein level). Expressed in the medial prefrontal cortex, prelimbic cortex, intralimbic cortex and cingulate cortex area (at protein level). Isoform 1: Expressed as 2 transcripts encoding the same protein, a ubiquitous transcript and a highly expressed testis-specific transcript.

The protein localises to the nucleus. It is found in the chromosome. The enzyme catalyses L-lysyl-[protein] + acetyl-CoA = N(6)-acetyl-L-lysyl-[protein] + CoA + H(+). It carries out the reaction 3-hydroxybutanoyl-CoA = (2E)-butenoyl-CoA + H2O. Chromatin reader protein that recognizes and binds histone H3 trimethylated at 'Lys-9', dimethylated at 'Lys-27' and trimethylated at 'Lys-27' (H3K9me3, H3K27me2 and H3K27me3, respectively). Part of multimeric repressive chromatin complexes, where it is required for transmission and restoration of repressive histone marks, thereby preserving the epigenetic landscape. Required for chromatin targeting and maximal enzymatic activity of Polycomb repressive complex 2 (PRC2); acts as a positive regulator of PRC2 activity by bridging the pre-existing histone H3K27me3 and newly recruited PRC2 on neighboring nucleosomes. Acts as a corepressor for REST by facilitating histone-lysine N-methyltransferase EHMT2 recruitment and H3K9 dimethylation at REST target genes for repression. Involved in X chromosome inactivation in females: recruited to Xist RNA-coated X chromosome and facilitates propagation of H3K9me2 by anchoring EHMT2. Promotes EZH2 accumulation and H3K27me3 methylation at DNA double strand breaks (DSBs), thereby facilitating transcriptional repression at sites of DNA damage and homology-directed repair of DSBs. Required for neuronal migration during brain development by repressing expression of RHOA. By repressing the expression of SCN8A, contributes to the inhibition of intrinsic neuronal excitability and epileptogenesis. In addition to acting as a chromatin reader, acts as a hydro-lyase. Shows crotonyl-coA hydratase activity by mediating the conversion of crotonyl-CoA ((2E)-butenoyl-CoA) to beta-hydroxybutyryl-CoA (3-hydroxybutanoyl-CoA), thereby acting as a negative regulator of histone crotonylation. Histone crotonylation is required during spermatogenesis; down-regulation of histone crotonylation by CDYL regulates the reactivation of sex chromosome-linked genes in round spermatids and histone replacement in elongating spermatids. By regulating histone crotonylation and trimethylation of H3K27, may be involved in stress-induced depression-like behaviors, possibly by regulating VGF expression. May have histone acetyltransferase activity; such activity is however unsure in vivo. Its function is as follows. Not able to recognize and bind histone H3K9me3, histone H3K27me2 and histone H3K27me3, due to the presence of a N-terminal extension that inactivates the chromo domain. The sequence is that of Chromodomain Y-like protein from Mus musculus (Mouse).